Consider the following 385-residue polypeptide: 1-deoxy-D-xylulose 5-phosphate reductoisomerase (385 aa).

7 residues coordinate NADPH: S10, G11, S12, I13, G36, N38, and N124. K125 serves as a coordination point for 1-deoxy-D-xylulose 5-phosphate. Residue E126 participates in NADPH binding. A Mn(2+)-binding site is contributed by D150. Residues S151, E152, S176, and H198 each coordinate 1-deoxy-D-xylulose 5-phosphate. Mn(2+) is bound at residue E152. G204 is a binding site for NADPH. 1-deoxy-D-xylulose 5-phosphate contacts are provided by S211, N216, K217, and E220. Residue E220 participates in Mn(2+) binding.

Belongs to the DXR family. It depends on Mg(2+) as a cofactor. The cofactor is Mn(2+).

The enzyme catalyses 2-C-methyl-D-erythritol 4-phosphate + NADP(+) = 1-deoxy-D-xylulose 5-phosphate + NADPH + H(+). It functions in the pathway isoprenoid biosynthesis; isopentenyl diphosphate biosynthesis via DXP pathway; isopentenyl diphosphate from 1-deoxy-D-xylulose 5-phosphate: step 1/6. In terms of biological role, catalyzes the NADPH-dependent rearrangement and reduction of 1-deoxy-D-xylulose-5-phosphate (DXP) to 2-C-methyl-D-erythritol 4-phosphate (MEP). The polypeptide is 1-deoxy-D-xylulose 5-phosphate reductoisomerase (Endomicrobium trichonymphae).